A 911-amino-acid polypeptide reads, in one-letter code: Protein translocase subunit SecA (911 aa).

ATP-binding positions include Q90, G108 to T112, and D515. Residues C891, C893, C902, and H903 each coordinate Zn(2+).

It belongs to the SecA family. In terms of assembly, monomer and homodimer. Part of the essential Sec protein translocation apparatus which comprises SecA, SecYEG and auxiliary proteins SecDF-YajC and YidC. It depends on Zn(2+) as a cofactor.

The protein resides in the cell inner membrane. Its subcellular location is the cytoplasm. The enzyme catalyses ATP + H2O + cellular proteinSide 1 = ADP + phosphate + cellular proteinSide 2.. Part of the Sec protein translocase complex. Interacts with the SecYEG preprotein conducting channel. Has a central role in coupling the hydrolysis of ATP to the transfer of proteins into and across the cell membrane, serving both as a receptor for the preprotein-SecB complex and as an ATP-driven molecular motor driving the stepwise translocation of polypeptide chains across the membrane. The chain is Protein translocase subunit SecA from Blochmanniella pennsylvanica (strain BPEN).